The chain runs to 279 residues: Dehydrogenase/reductase SDR family member 4 (279 aa).

37 to 61 (LVTASTDGIGLAIARRLAEDGAHVV) contributes to the NADP(+) binding site. Lys-93 is subject to N6-acetyllysine; alternate. Lys-93 is modified (N6-succinyllysine; alternate). N6-acetyllysine is present on Lys-106. Residue Ser-170 participates in substrate binding. Tyr-183 functions as the Proton acceptor in the catalytic mechanism. NADP(+) is bound at residue Lys-187. Lys-217 carries the N6-acetyllysine; alternate modification. At Lys-217 the chain carries N6-succinyllysine; alternate. The residue at position 221 (Ser-221) is a Phosphoserine. N6-succinyllysine occurs at positions 228 and 235. A Peroxisomal targeting signal motif is present at residues 277-279 (SRL).

This sequence belongs to the short-chain dehydrogenases/reductases (SDR) family. Homotetramer.

It localises to the peroxisome. The enzyme catalyses a secondary alcohol + NADP(+) = a ketone + NADPH + H(+). It carries out the reaction 3alpha-hydroxy-5beta-pregnan-20-one + NADP(+) = 5beta-pregnan-3,20-dione + NADPH + H(+). It catalyses the reaction 5beta-dihydrotestosterone + NADPH + H(+) = 5beta-androstane-3alpha,17beta-diol + NADP(+). The catalysed reaction is all-trans-retinol + NADP(+) = all-trans-retinal + NADPH + H(+). The enzyme catalyses isatin + NADPH + H(+) = 3-hydroxyindolin-2-one + NADP(+). NADPH-dependent oxidoreductase which catalyzes the reduction of a variety of compounds bearing carbonyl groups including ketosteroids, alpha-dicarbonyl compounds, aldehydes, aromatic ketones and quinones. Reduces all-trans-retinal and 9-cis retinal. Reduces 3-ketosteroids and benzil into 3alpha-hydroxysteroids and S-benzoin, respectively, in contrast to the stereoselectivity of primates DHRS4s which produce 3beta-hydroxysteroids and R-benzoin. In the reverse reaction, catalyzes the NADP-dependent oxidation of 3alpha-hydroxysteroids and alcohol, but with much lower efficiency. Involved in the metabolism of 3alpha-hydroxysteroids, retinoid, isatin and xenobiotic carbonyl compounds. The chain is Dehydrogenase/reductase SDR family member 4 (Dhrs4) from Rattus norvegicus (Rat).